Reading from the N-terminus, the 395-residue chain is Methylthioribose-1-phosphate isomerase (395 aa).

Asp258 functions as the Proton donor in the catalytic mechanism.

Belongs to the eIF-2B alpha/beta/delta subunits family. MtnA subfamily.

The protein resides in the cytoplasm. It is found in the nucleus. It carries out the reaction 5-(methylsulfanyl)-alpha-D-ribose 1-phosphate = 5-(methylsulfanyl)-D-ribulose 1-phosphate. It participates in amino-acid biosynthesis; L-methionine biosynthesis via salvage pathway; L-methionine from S-methyl-5-thio-alpha-D-ribose 1-phosphate: step 1/6. Catalyzes the interconversion of methylthioribose-1-phosphate (MTR-1-P) into methylthioribulose-1-phosphate (MTRu-1-P). The chain is Methylthioribose-1-phosphate isomerase from Podospora anserina (strain S / ATCC MYA-4624 / DSM 980 / FGSC 10383) (Pleurage anserina).